The primary structure comprises 137 residues: Holo-[acyl-carrier-protein] synthase (137 aa).

Residues Asp-8 and Glu-57 each contribute to the Mg(2+) site.

Belongs to the P-Pant transferase superfamily. AcpS family. The cofactor is Mg(2+).

The protein localises to the cytoplasm. It carries out the reaction apo-[ACP] + CoA = holo-[ACP] + adenosine 3',5'-bisphosphate + H(+). In terms of biological role, transfers the 4'-phosphopantetheine moiety from coenzyme A to a Ser of acyl-carrier-protein. This is Holo-[acyl-carrier-protein] synthase from Mesorhizobium japonicum (strain LMG 29417 / CECT 9101 / MAFF 303099) (Mesorhizobium loti (strain MAFF 303099)).